The chain runs to 490 residues: Lipoprotein lipase (490 aa).

Positions 1 to 25 (MERGRGMGKTALLAVLCLCLRGAAG) are cleaved as a signal peptide. The interaction with GPIHBP1 stretch occupies residues 32–53 (MNFEGIESKFSLRTPAEPDEDV). Cys-54 and Cys-67 are disulfide-bonded. N-linked (GlcNAc...) (complex) asparagine glycosylation is present at Asn-70. Tyr-121 bears the 3'-nitrotyrosine mark. The Nucleophile role is filled by Ser-159. Residue Asp-183 is the Charge relay system of the active site. Residue Tyr-191 is modified to 3'-nitrotyrosine. Ca(2+) is bound by residues Ala-194, Arg-197, Ser-199, and Asp-202. Cys-243 and Cys-266 form a disulfide bridge. Residues 243–266 (CNLGEALRLIAEKGFSDVDQLVKC) are essential for determining substrate specificity. Residue His-268 is the Charge relay system of the active site. Intrachain disulfides connect Cys-291/Cys-310 and Cys-302/Cys-305. In terms of domain architecture, PLAT spans 341–464 (FHYQVKIHFF…KGEEAAIFVK (124 aa)). Tyr-343 bears the 3'-nitrotyrosine mark. 2 N-linked (GlcNAc...) asparagine glycosylation sites follow: Asn-354 and Asn-386. The interval 417 to 421 (WSDWW) is important for interaction with lipoprotein particles. Residues 430-434 (RVRVK) are important for heparin binding. Residue 430-441 (RVRVKSGETQKK) coordinates heparin. Residues 443–467 (VFCSRDGSSRLGKGEEAAIFVKCLE) form an interaction with GPIHBP1 region. Cys-445 and Cys-465 are oxidised to a cystine. The disordered stretch occupies residues 471 to 490 (SRKRGGAKKASKENSAHESA). The span at 480–490 (ASKENSAHESA) shows a compositional bias: basic and acidic residues.

It belongs to the AB hydrolase superfamily. Lipase family. Homodimer. Interacts with GPIHBP1 with 1:1 stoichiometry. Interacts with APOC2; the interaction activates LPL activity in the presence of lipids. Interaction with heparan sulfate proteoglycans is required to protect LPL against loss of activity. Associates with lipoprotein particles in blood plasma. Interacts with LMF1 and SEL1L; interaction with SEL1L is required to prevent aggregation of newly synthesized LPL in the endoplasmic reticulum (ER), and for normal export of LPL from the ER to the extracellular space. N-glycan at Asn-70 is a triantennary complex oligosaccharide containing sialic acid, galactose, mannose, and N-acetylglucosamine, the reducing GlcNAc being sulfated at C6. Post-translationally, tyrosine nitration after lipopolysaccharide (LPS) challenge down-regulates the lipase activity.

It localises to the cell membrane. Its subcellular location is the secreted. The protein resides in the extracellular space. The protein localises to the extracellular matrix. It carries out the reaction a triacylglycerol + H2O = a diacylglycerol + a fatty acid + H(+). The enzyme catalyses a 1,2-diacyl-sn-glycero-3-phosphocholine + H2O = a 2-acyl-sn-glycero-3-phosphocholine + a fatty acid + H(+). The catalysed reaction is 1,2,3-tri-(9Z-octadecenoyl)-glycerol + H2O = di-(9Z)-octadecenoylglycerol + (9Z)-octadecenoate + H(+). It catalyses the reaction 1,2-di-(9Z-octadecenoyl)-sn-glycero-3-phosphocholine + H2O = (9Z-octadecenoyl)-sn-glycero-3-phosphocholine + (9Z)-octadecenoate + H(+). It carries out the reaction 1,2,3-tributanoylglycerol + H2O = dibutanoylglycerol + butanoate + H(+). The enzyme catalyses 1,2-dihexadecanoyl-sn-glycero-3-phosphocholine + H2O = hexadecanoyl-sn-glycero-3-phosphocholine + hexadecanoate + H(+). Its activity is regulated as follows. Ca(2+) binding promotes protein stability and formation of the active homodimer. In terms of biological role, key enzyme in triglyceride metabolism. Catalyzes the hydrolysis of triglycerides from circulating chylomicrons and very low density lipoproteins (VLDL), and thereby plays an important role in lipid clearance from the blood stream, lipid utilization and storage. Although it has both phospholipase and triglyceride lipase activities it is primarily a triglyceride lipase with low but detectable phospholipase activity. Mediates margination of triglyceride-rich lipoprotein particles in capillaries. Recruited to its site of action on the luminal surface of vascular endothelium by binding to GPIHBP1 and cell surface heparan sulfate proteoglycans. The sequence is that of Lipoprotein lipase (LPL) from Gallus gallus (Chicken).